The chain runs to 162 residues: Protein-export protein SecB 2 (162 aa).

This sequence belongs to the SecB family. Homotetramer, a dimer of dimers. One homotetramer interacts with 1 SecA dimer.

It is found in the cytoplasm. Its function is as follows. One of the proteins required for the normal export of preproteins out of the cell cytoplasm. It is a molecular chaperone that binds to a subset of precursor proteins, maintaining them in a translocation-competent state. It also specifically binds to its receptor SecA. In Polaromonas naphthalenivorans (strain CJ2), this protein is Protein-export protein SecB 2.